The sequence spans 457 residues: Cysteine desulfurase (457 aa).

Residues Ala-127, Thr-128, Gln-235, Ser-255, and His-257 each contribute to the pyridoxal 5'-phosphate site. Lys-258 carries the post-translational modification N6-(pyridoxal phosphate)lysine. Thr-295 lines the pyridoxal 5'-phosphate pocket. The active-site Cysteine persulfide intermediate is Cys-381. Residue Cys-381 participates in [2Fe-2S] cluster binding. Cys-381 provides a ligand contact to Zn(2+). Cysteine persulfide is present on Cys-381.

Belongs to the class-V pyridoxal-phosphate-dependent aminotransferase family. NifS/IscS subfamily. As to quaternary structure, homodimer. Component of the mitochondrial core iron-sulfur cluster (ISC) complex composed of NFS1, LYRM4, NDUFAB1, ISCU, FXN, and FDX2; this complex is a heterohexamer containing two copies of each monomer. Component of cyteine desulfurase complex composed of NFS1, LYRM4 and NDUFAB1; this complex contributes to the activation of cysteine desulfurase activity and NFS1 stabilization. Interacts (homodimer form) with ISCU (D-state); each monomer interacts with the C-terminal regions of each NFS1 monomer. Interacts with HSPA9. Interacts (via homodimer form) with FDX2. Interacts (via homodimer form) with FXN. Interacts with LYRM4. Component of a complex composed of FXN, NFS1, LYRM4 and ISCU. Monomer. Homodimer. Oligomer. Interacts with ISCU. Component of the cysteine desulfurase complex composed of NFS1 and LYRM4; this complex contributes to the activation of cysteine desulfurase activity. Interacts with MOCS3. It depends on pyridoxal 5'-phosphate as a cofactor. N-gluconoylated. In terms of processing, cysteine persulfide intermediate is reduced by thiol-containing molecules like glutathione and L-cysteine. Persulfide reduction is a rate-limiting step of cysteine desulfurase catalytic cycle. In terms of tissue distribution, predominantly expressed in heart and skeletal muscle. Also found in brain, liver and pancreas.

The protein localises to the mitochondrion. It is found in the cytoplasm. It localises to the nucleus. Its subcellular location is the cytoskeleton. The protein resides in the microtubule organizing center. The protein localises to the centrosome. The enzyme catalyses (sulfur carrier)-H + L-cysteine = (sulfur carrier)-SH + L-alanine. It carries out the reaction L-cysteinyl-[cysteine desulfurase] + L-cysteine = S-sulfanyl-L-cysteinyl-[cysteine desulfurase] + L-alanine. Active only in complex with LYRM4. Functionally, cysteine desulfurase, of the core iron-sulfur cluster (ISC) assembly complex, that catalyzes the desulfuration of L-cysteine to L-alanine, as component of the cysteine desulfurase complex, leading to the formation of a cysteine persulfide intermediate at the active site cysteine residue and participates in the [2Fe-2S] clusters assembly on the scaffolding protein ISCU. The persulfide is then transferred on the flexible Cys loop from the catalytic site of NFS1 to the surface of NFS1. After the NFS1-linked persulfide sulfur is transferred to one of the conserved Cys residues of the scaffold, a reaction assisted by FXN. The core iron-sulfur cluster (ISC) assembly complex is involved in the de novo synthesis of a [2Fe-2S] cluster, the first step of the mitochondrial iron-sulfur protein biogenesis. This process is initiated by the cysteine desulfurase complex (NFS1:LYRM4:NDUFAB1) that produces persulfide which is delivered on the scaffold protein ISCU in a FXN-dependent manner. Then this complex is stabilized by FDX2 which provides reducing equivalents to accomplish the [2Fe-2S] cluster assembly. Finally, the [2Fe-2S] cluster is transferred from ISCU to chaperone proteins, including HSCB, HSPA9 and GLRX5. Its function is as follows. May catalyze the desulfuration of L-cysteine to L-alanine as component of the cysteine desulfurase complex (NFS1:LYRM4), leading to the formation of a cysteine persulfide intermediate. Acts as a sulfur donor for MOCS3 by transferring the sulfur of the cysteine persulfide intermediate on MOCS3. The polypeptide is Cysteine desulfurase (Homo sapiens (Human)).